The sequence spans 562 residues: Aureusidin synthase (562 aa).

Cystine bridges form between cysteine 71–cysteine 86 and cysteine 85–cysteine 148. 6 residues coordinate Cu cation: histidine 147, histidine 168, histidine 177, histidine 301, histidine 305, and histidine 335. A cross-link (2'-(S-cysteinyl)-histidine (Cys-His)) is located at residues 151-168 (CAGAYNQAGFTNLKLQIH).

This sequence belongs to the tyrosinase family. In terms of assembly, monomer. Cu(2+) is required as a cofactor. Glycosylated. Post-translationally, contains probably N- and C-terminal propeptides. Expressed in petals. Not detected in stems and leaves.

It localises to the vacuole lumen. It catalyses the reaction 2',4,4',6'-tetrahydroxychalcone 4'-O-beta-D-glucoside + O2 = aureusidin 6-O-beta-glucoside + H2O. It carries out the reaction 2 2',3,4,4',6'-pentahydroxychalcone 4'-O-beta-D-glucoside + O2 + 2 H(+) = 2 aureusidin 6-O-beta-glucoside + 2 H2O. The enzyme catalyses 2',3,4,4',6'-pentahydroxychalcone 4'-O-beta-D-glucoside + O2 + H(+) = bracteatin 6-O-beta-glucoside + H2O. With respect to regulation, h(2)O(2) activates the 3-hydroxylation and oxidative cyclization of tetrahydroxychalcone but inhibits reaction with pentahydroxychalcone. Inhibited by phenylthiourea. In terms of biological role, involved in the biosynthesis of aurones, plant flavonoids that provide yellow coloration to flowers. Can use tetrahydroxychalcone (THC), pentahydroxychalcone (PHC), THC 4'-glucoside and PHC 4'-glucoside as substrates, but not 2'-hydroxychalcone, 4-hydroxychalcone, PHC 3-glucoside, 2',6'-dihydroxy-4,4'-dimethoxychalcone, naringenin, eriodictyol and 4,4',6-trihydroxyaurone. Can also produce bracteatin from PHC. This is Aureusidin synthase (AS1) from Antirrhinum majus (Garden snapdragon).